The sequence spans 612 residues: Dihydroxy-acid dehydratase (612 aa).

Asp-81 serves as a coordination point for Mg(2+). Cys-122 contacts [2Fe-2S] cluster. The Mg(2+) site is built by Asp-123 and Lys-124. Position 124 is an N6-carboxylysine (Lys-124). Cys-195 provides a ligand contact to [2Fe-2S] cluster. Glu-491 is a binding site for Mg(2+). Ser-517 functions as the Proton acceptor in the catalytic mechanism.

It belongs to the IlvD/Edd family. In terms of assembly, homodimer. Requires [2Fe-2S] cluster as cofactor. The cofactor is Mg(2+).

It catalyses the reaction (2R)-2,3-dihydroxy-3-methylbutanoate = 3-methyl-2-oxobutanoate + H2O. It carries out the reaction (2R,3R)-2,3-dihydroxy-3-methylpentanoate = (S)-3-methyl-2-oxopentanoate + H2O. It functions in the pathway amino-acid biosynthesis; L-isoleucine biosynthesis; L-isoleucine from 2-oxobutanoate: step 3/4. It participates in amino-acid biosynthesis; L-valine biosynthesis; L-valine from pyruvate: step 3/4. Functions in the biosynthesis of branched-chain amino acids. Catalyzes the dehydration of (2R,3R)-2,3-dihydroxy-3-methylpentanoate (2,3-dihydroxy-3-methylvalerate) into 2-oxo-3-methylpentanoate (2-oxo-3-methylvalerate) and of (2R)-2,3-dihydroxy-3-methylbutanoate (2,3-dihydroxyisovalerate) into 2-oxo-3-methylbutanoate (2-oxoisovalerate), the penultimate precursor to L-isoleucine and L-valine, respectively. This chain is Dihydroxy-acid dehydratase, found in Rhizobium leguminosarum bv. trifolii (strain WSM2304).